We begin with the raw amino-acid sequence, 319 residues long: Capsid protein (319 aa).

The protein resides in the virion. Functionally, the capsid protein self-assembles to form an icosahedral capsid with a T=2 symmetry made of 120 subunits. The polypeptide is Capsid protein (Cryptosporidium parvum virus 1 (strain KSU-1)).